We begin with the raw amino-acid sequence, 366 residues long: Class I histocompatibility antigen, Gogo-C*0202 alpha chain (366 aa).

The signal sequence occupies residues 1–24; it reads MRVMAPRTLILLLSGALALTETWA. The tract at residues 25–114 is alpha-1; sequence GSHSMRYFYT…LRGYYNQSED (90 aa). At 25–308 the chain is on the extracellular side; it reads GSHSMRYFYT…EPSSQPTIPI (284 aa). N110 carries an N-linked (GlcNAc...) asparagine glycan. An alpha-2 region spans residues 115 to 206; that stretch reads GSHTLQSMYG…ENGKETLQRA (92 aa). Cystine bridges form between C125-C188 and C227-C283. The interval 207–298 is alpha-3; it reads EPPKTHVTHH…GLPEPLTLRW (92 aa). Residues 209 to 297 form the Ig-like C1-type domain; that stretch reads PKTHVTHHPL…EGLPEPLTLR (89 aa). Residues 299–308 form a connecting peptide region; the sequence is EPSSQPTIPI. A helical membrane pass occupies residues 309–332; that stretch reads VGIVVGLAVLVVLAVLGAVVTAMM. Topologically, residues 333–366 are cytoplasmic; it reads CRRKSSGGKGGSCSQAACSNSAQGSDESLITCKA.

This sequence belongs to the MHC class I family. Heterodimer of an alpha chain and a beta chain (beta-2-microglobulin).

Its subcellular location is the membrane. Involved in the presentation of foreign antigens to the immune system. The protein is Class I histocompatibility antigen, Gogo-C*0202 alpha chain of Gorilla gorilla gorilla (Western lowland gorilla).